The following is a 438-amino-acid chain: Trigger factor (438 aa).

In terms of domain architecture, PPIase FKBP-type spans 160 to 245; it reads DDKVTIDFVG…VKKIQQAELP (86 aa).

This sequence belongs to the FKBP-type PPIase family. Tig subfamily.

The protein resides in the cytoplasm. The enzyme catalyses [protein]-peptidylproline (omega=180) = [protein]-peptidylproline (omega=0). Functionally, involved in protein export. Acts as a chaperone by maintaining the newly synthesized protein in an open conformation. Functions as a peptidyl-prolyl cis-trans isomerase. The protein is Trigger factor of Francisella tularensis subsp. holarctica (strain LVS).